A 544-amino-acid chain; its full sequence is GMP synthase [glutamine-hydrolyzing] (544 aa).

The Glutamine amidotransferase type-1 domain occupies 12 to 210; the sequence is TILILDFGSQ…VKNVCSVRDG (199 aa). The active-site Nucleophile is the C88. Active-site residues include H184 and E186. In terms of domain architecture, GMPS ATP-PPase spans 211-419; that stretch reads WSMESFIPKE…LNIPEHLVGR (209 aa). An ATP-binding site is contributed by 239–245; the sequence is SGGVDST. 4 residues coordinate XMP: R312, D481, K536, and E542.

In terms of assembly, homodimer. Also forms a small population of homotetramers. Requires Mg(2+) as cofactor.

It is found in the cytoplasm. The protein localises to the cytosol. It carries out the reaction XMP + L-glutamine + ATP + H2O = GMP + L-glutamate + AMP + diphosphate + 2 H(+). It functions in the pathway purine metabolism; GMP biosynthesis; GMP from XMP (L-Gln route): step 1/1. Its function is as follows. Catalyzes the conversion of xanthine monophosphate (XMP) to GMP in the presence of glutamine and ATP through an adenyl-XMP intermediate. The protein is GMP synthase [glutamine-hydrolyzing] of Cryptococcus neoformans var. neoformans serotype D (strain JEC21 / ATCC MYA-565) (Filobasidiella neoformans).